We begin with the raw amino-acid sequence, 147 residues long: Large ribosomal subunit protein uL13 (147 aa).

It belongs to the universal ribosomal protein uL13 family. As to quaternary structure, part of the 50S ribosomal subunit.

In terms of biological role, this protein is one of the early assembly proteins of the 50S ribosomal subunit, although it is not seen to bind rRNA by itself. It is important during the early stages of 50S assembly. The sequence is that of Large ribosomal subunit protein uL13 from Paenarthrobacter aurescens (strain TC1).